A 127-amino-acid chain; its full sequence is Large ribosomal subunit protein bL12 (127 aa).

It belongs to the bacterial ribosomal protein bL12 family. Homodimer. Part of the ribosomal stalk of the 50S ribosomal subunit. Forms a multimeric L10(L12)X complex, where L10 forms an elongated spine to which 2 to 4 L12 dimers bind in a sequential fashion. Binds GTP-bound translation factors.

In terms of biological role, forms part of the ribosomal stalk which helps the ribosome interact with GTP-bound translation factors. Is thus essential for accurate translation. This Chloroherpeton thalassium (strain ATCC 35110 / GB-78) protein is Large ribosomal subunit protein bL12.